A 508-amino-acid polypeptide reads, in one-letter code: MGLPWYRVHTVVLNDPGRLLSVHIMHTALVSGWAGSMALYELAVFDPSDPVLDPMWRQGMFVIPFMTRLGITNSWGGWSITGGTITNPGIWSYEGVAGAHIVFSGLCFLAAIWHWVYWDLEIFCDERTGKPSLDLPKIFGIHLFLSGVACFGFGAFHVTGLYGPGIWVSDPYGLTGKVQPVNPAWGAEGFDPFVPGGIASHHIAAGTLGILAGLFHLSVRPPQRLYKGLRMGNIETVLSSSIAAVFFAAFVVAGTMWYGSATTPIELFGPTRYQWDQGYFQQEIYRRVGAGLAENLSLSEAWSKIPEKLAFYDYIGNNPAKGGLFRAGSMDNGDGIAVGWLGHPVFRDKEGHELFVRRMPTFFETFPVVLVDGDGIVRADVPFRRAESKYSVEQVGVTVEFYGGELNGVSYSDPATVKKYARRAQLGEIFELDRATLKSDGVFRSSPRGWFTFGHATFALLFFFGHIWHGARTLFRDVFAGIDPDLDAQVEFGAFQKLGDPTTRRQVV.

6 consecutive transmembrane segments (helical) span residues 21–36 (SVHIMHTALVSGWAGS), 101–115 (IVFSGLCFLAAIWHW), 140–156 (GIHLFLSGVACFGFGAF), 203–218 (IAAGTLGILAGLFHLS), 237–252 (VLSSSIAAVFFAAFVV), and 457–472 (TFALLFFFGHIWHGAR).

The protein belongs to the PsbB/PsbC family. PsbB subfamily. In terms of assembly, PSII is composed of 1 copy each of membrane proteins PsbA, PsbB, PsbC, PsbD, PsbE, PsbF, PsbH, PsbI, PsbJ, PsbK, PsbL, PsbM, PsbT, PsbX, PsbY, PsbZ, Psb30/Ycf12, at least 3 peripheral proteins of the oxygen-evolving complex and a large number of cofactors. It forms dimeric complexes. Binds multiple chlorophylls. PSII binds additional chlorophylls, carotenoids and specific lipids. is required as a cofactor.

The protein resides in the plastid. It localises to the chloroplast thylakoid membrane. Its function is as follows. One of the components of the core complex of photosystem II (PSII). It binds chlorophyll and helps catalyze the primary light-induced photochemical processes of PSII. PSII is a light-driven water:plastoquinone oxidoreductase, using light energy to abstract electrons from H(2)O, generating O(2) and a proton gradient subsequently used for ATP formation. The sequence is that of Photosystem II CP47 reaction center protein from Calycanthus floridus var. glaucus (Eastern sweetshrub).